Here is a 402-residue protein sequence, read N- to C-terminus: Opaque-phase-specific protein OP4 (402 aa).

An N-terminal signal peptide occupies residues 1-20; the sequence is MKFSQATILAIFASSALVSA. N-linked (GlcNAc...) asparagine glycans are attached at residues Asn140 and Asn293. The disordered stretch occupies residues 302-322; the sequence is NNAGSSSKPTGTTTASTATAA. Positions 304–322 are enriched in low complexity; that stretch reads AGSSSKPTGTTTASTATAA.

In Candida albicans (strain WO-1) (Yeast), this protein is Opaque-phase-specific protein OP4 (OPS4).